The following is a 265-amino-acid chain: Undecaprenyl-diphosphatase 1 (265 aa).

Helical transmembrane passes span 4–24, 42–62, 84–104, 108–128, 184–204, 217–237, and 245–265; these read IITA…PISS, AKTF…ILYH, FHVF…HDII, LFQP…MIFA, SEFS…LDLL, MFAV…VTFL, and LKPF…FVLL.

The protein belongs to the UppP family.

Its subcellular location is the cell membrane. It carries out the reaction di-trans,octa-cis-undecaprenyl diphosphate + H2O = di-trans,octa-cis-undecaprenyl phosphate + phosphate + H(+). Functionally, catalyzes the dephosphorylation of undecaprenyl diphosphate (UPP). Confers resistance to bacitracin. This Bacillus thuringiensis subsp. konkukian (strain 97-27) protein is Undecaprenyl-diphosphatase 1.